A 402-amino-acid chain; its full sequence is Phosphopentomutase (402 aa).

Mn(2+) is bound by residues Asp10, Asp301, His306, Asp342, His343, and His354.

Belongs to the phosphopentomutase family. Mn(2+) is required as a cofactor.

Its subcellular location is the cytoplasm. The enzyme catalyses 2-deoxy-alpha-D-ribose 1-phosphate = 2-deoxy-D-ribose 5-phosphate. It catalyses the reaction alpha-D-ribose 1-phosphate = D-ribose 5-phosphate. It participates in carbohydrate degradation; 2-deoxy-D-ribose 1-phosphate degradation; D-glyceraldehyde 3-phosphate and acetaldehyde from 2-deoxy-alpha-D-ribose 1-phosphate: step 1/2. Functionally, isomerase that catalyzes the conversion of deoxy-ribose 1-phosphate (dRib-1-P) and ribose 1-phosphate (Rib-1-P) to deoxy-ribose 5-phosphate (dRib-5-P) and ribose 5-phosphate (Rib-5-P), respectively. In Aeromonas hydrophila subsp. hydrophila (strain ATCC 7966 / DSM 30187 / BCRC 13018 / CCUG 14551 / JCM 1027 / KCTC 2358 / NCIMB 9240 / NCTC 8049), this protein is Phosphopentomutase.